Here is a 657-residue protein sequence, read N- to C-terminus: Pentatricopeptide repeat-containing protein At5g44230 (657 aa).

PPR repeat units follow at residues 45–79 (KELL…GLDQ), 80–112 (SCYI…VQFR), 113–147 (NPFL…EITP), 148–178 (VSFT…TFRL), 183–213 (FVYV…MPER), 214–244 (DVIS…LPTK), 245–279 (DMVA…GIRA), 280–314 (DEVT…GYSP), 317–347 (HVVI…MNNK), 348–383 (NVFT…EIKP), 384–419 (NTVT…GVQP), and 420–450 (TRDH…MSVE). The type E motif stretch occupies residues 455–530 (VWGALLGACR…TPAVSWVVDK (76 aa)). Residues 532–562 (GQMHKFFPGNLNHPMSNKIQDKLEELVERLT) are type E(+) motif. The segment at 563 to 657 (VLGYQPDLSS…SGDCSCGDFW (95 aa)) is type DYW motif.

It belongs to the PPR family. PCMP-H subfamily.

The chain is Pentatricopeptide repeat-containing protein At5g44230 (PCMP-H17) from Arabidopsis thaliana (Mouse-ear cress).